The sequence spans 114 residues: UPF0342 protein PEPE_0673 (114 aa).

The protein belongs to the UPF0342 family.

This chain is UPF0342 protein PEPE_0673, found in Pediococcus pentosaceus (strain ATCC 25745 / CCUG 21536 / LMG 10740 / 183-1w).